The sequence spans 808 residues: Probable E3 ubiquitin-protein ligase MARCHF10 (808 aa).

3 disordered regions span residues 33–81 (LRRQ…LTEP), 101–268 (QTSV…RKAS), and 284–415 (SRRE…EVGV). Positions 34-49 (RRQEYRRDPNEKKRDQ) are enriched in basic and acidic residues. Residues 237 to 249 (QAFQGKNSPQVLS) show a composition bias toward polar residues. Basic and acidic residues-rich tracts occupy residues 330–349 (KNFEENAENCRGHSSRRSEP) and 379–397 (LPDRESATEKDRGGSENAK). The RING-CH-type zinc-finger motif lies at 651–721 (DSEEEGDLCR…EMCKQGLLVD (71 aa)). Cysteine 659, cysteine 662, cysteine 677, cysteine 679, histidine 687, cysteine 690, cysteine 711, and cysteine 714 together coordinate Zn(2+). Positions 773-808 (ERERLSRNYPQPRTEENENSELGDGNEGSISQSQVV) are disordered.

The catalysed reaction is S-ubiquitinyl-[E2 ubiquitin-conjugating enzyme]-L-cysteine + [acceptor protein]-L-lysine = [E2 ubiquitin-conjugating enzyme]-L-cysteine + N(6)-ubiquitinyl-[acceptor protein]-L-lysine.. It participates in protein modification; protein ubiquitination. Functionally, E3 ubiquitin-protein ligase. E3 ubiquitin ligases accept ubiquitin from an E2 ubiquitin-conjugating enzyme in the form of a thioester and then directly transfer the ubiquitin to targeted substrates. The polypeptide is Probable E3 ubiquitin-protein ligase MARCHF10 (Homo sapiens (Human)).